A 173-amino-acid polypeptide reads, in one-letter code: MTARVCVARIGAAHGLRGEVRLWTFTEDPIAVTRYGSLSTKDGARQFEVTHAREVKDYLVATLTGVTTREEAERLNGTDLYVARDKLPATDEGEFYHADLIGLAAVDVAGKPLGTVAAIHNFGAGDIIEIAPAHGPTLMLPFTDAVVPTVDIAGGRVVIEMPGEIDGDTPDQA.

The region spanning 92 to 165 (EGEFYHADLI…RVVIEMPGEI (74 aa)) is the PRC barrel domain.

The protein belongs to the RimM family. In terms of assembly, binds ribosomal protein uS19.

The protein localises to the cytoplasm. Functionally, an accessory protein needed during the final step in the assembly of 30S ribosomal subunit, possibly for assembly of the head region. Essential for efficient processing of 16S rRNA. May be needed both before and after RbfA during the maturation of 16S rRNA. It has affinity for free ribosomal 30S subunits but not for 70S ribosomes. The protein is Ribosome maturation factor RimM of Nitrobacter hamburgensis (strain DSM 10229 / NCIMB 13809 / X14).